A 638-amino-acid chain; its full sequence is DNA mismatch repair protein MutL (638 aa).

The interval 404-433 (FGTQTNAFGSMATPRDNSRGNYSAGESRQR) is disordered.

Belongs to the DNA mismatch repair MutL/HexB family.

In terms of biological role, this protein is involved in the repair of mismatches in DNA. It is required for dam-dependent methyl-directed DNA mismatch repair. May act as a 'molecular matchmaker', a protein that promotes the formation of a stable complex between two or more DNA-binding proteins in an ATP-dependent manner without itself being part of a final effector complex. The protein is DNA mismatch repair protein MutL of Shewanella baltica (strain OS195).